The following is a 104-amino-acid chain: U20-lycotoxin-Ls1a (104 aa).

The N-terminal stretch at 1–30 (MFSTSDQVSKMNSRILSALLILGIATCVIA) is a signal peptide. A WAP domain is found at 31–76 (GGFCPKSRHPQCNLSYKINDCCAQSDCRVGSVCCVEGCGNVCRAES). Intrachain disulfides connect Cys-34-Cys-64, Cys-42-Cys-68, Cys-51-Cys-63, Cys-52-Cys-90, and Cys-57-Cys-72.

This sequence belongs to the venom protein 11 family. 02 (wap-2) subfamily. In terms of processing, contains 5 disulfide bonds. Expressed by the venom gland.

The protein localises to the secreted. Has antibacterial activity. In Lycosa singoriensis (Wolf spider), this protein is U20-lycotoxin-Ls1a.